A 520-amino-acid chain; its full sequence is Probable methylmalonate-semialdehyde/malonate-semialdehyde dehydrogenase [acylating], mitochondrial (520 aa).

NAD(+) contacts are provided by Ala169, Phe171, Lys195, Glu198, Arg199, and Ser248. Cys303 functions as the Nucleophile in the catalytic mechanism. Position 403 (Glu403) interacts with NAD(+).

It belongs to the aldehyde dehydrogenase family. In terms of assembly, homotetramer.

The protein localises to the mitochondrion. It carries out the reaction 2-methyl-3-oxopropanoate + NAD(+) + CoA + H2O = propanoyl-CoA + hydrogencarbonate + NADH + H(+). The catalysed reaction is 3-oxopropanoate + NAD(+) + CoA + H2O = hydrogencarbonate + acetyl-CoA + NADH + H(+). Probable malonate and methylmalonate semialdehyde dehydrogenase involved in the catabolism of valine, thymine, and compounds catabolized by way of beta-alanine, including uracil and cytidine. This chain is Probable methylmalonate-semialdehyde/malonate-semialdehyde dehydrogenase [acylating], mitochondrial, found in Drosophila pseudoobscura pseudoobscura (Fruit fly).